The primary structure comprises 404 residues: Proteasomal ubiquitin receptor ADRM1-A (404 aa).

Residues 17–130 (SSSKYLVEFR…RKLNEYLNNP (114 aa)) enclose the Pru domain. Positions 195 to 247 (GSGGPTTSSSSSSSRSQSAAVTPSSTTSSTRTTSAPVAPAAAPATTPSPAVSS) are enriched in low complexity. Disordered regions lie at residues 195-258 (GSGG…TSPT) and 376-404 (FAKA…MSLD). Polar residues predominate over residues 248–258 (NDGASEATSPT). One can recognise a DEUBAD domain in the interval 278-390 (TGEGGQQVDL…QSTSSQKERE (113 aa)). The span at 386–395 (QKERESSEKK) shows a compositional bias: basic and acidic residues.

The protein belongs to the ADRM1 family. As to quaternary structure, component of the 19S proteasome regulatory particle complex. The 26S proteasome consists of a 20S core particle (CP) and two 19S regulatory subunits (RP).

It localises to the cytoplasm. The protein localises to the nucleus. Component of the 26S proteasome, a multiprotein complex involved in the ATP-dependent degradation of ubiquitinated proteins. This complex plays a key role in the maintenance of protein homeostasis by removing misfolded or damaged proteins, which could impair cellular functions, and by removing proteins whose functions are no longer required. Therefore, the proteasome participates in numerous cellular processes, including cell cycle progression, apoptosis, or DNA damage repair. Within the complex, functions as a proteasomal ubiquitin receptor. This chain is Proteasomal ubiquitin receptor ADRM1-A (adrm1-a), found in Xenopus laevis (African clawed frog).